We begin with the raw amino-acid sequence, 152 residues long: Natriuretic peptides A (152 aa).

Residues 1–24 (MGSFSITKGFFLFLAFWLPGHIGA) form the signal peptide. 2 consecutive propeptides follow at residues 25 to 122 (NPVY…AGPR) and 92 to 102 (DGGALGRGPWD). A disordered region spans residues 54–104 (DEVMPPQALSEQTDEAGAALSSLSEVPPWTGEVNPSQRDGGALGRGPWDPS). Ser128 carries the phosphoserine modification. A disulfide bridge links Cys129 with Cys145. The tract at residues 146-150 (NSFRY) is important for degradation of atrial natriuretic peptide by IDE.

It belongs to the natriuretic peptide family. As to quaternary structure, homodimer; disulfide-linked antiparallel dimer. In terms of processing, the precursor molecule is proteolytically cleaved by CORIN at Arg-122 to produce the atrial natriuretic peptide. Undergoes further proteolytic cleavage by unknown proteases to give rise to long-acting natriuretic peptide, vessel dilator and kaliuretic peptide. Additional processing gives rise to the auriculin and atriopeptin peptides. In the kidneys, alternative processing by an unknown protease results in the peptide urodilatin. Cleavage by MME initiates degradation of the factor and thereby regulates its activity. Degradation by IDE results in reduced activation of NPR1 (in vitro). During IDE degradation, the resulting products can temporarily stimulate NPR2 to produce cGMP, before the fragments are completely degraded and inactivated by IDE (in vitro). Post-translationally, degraded by IDE. In terms of processing, phosphorylation on Ser-128 decreases vasorelaxant activity. High levels of expression in the atria compared to the ventricles. Very low levels of expression detected in extracardiac tissues such as the brain, hypothalamus, pituitary, lung and aorta. In terms of tissue distribution, atria (at protein level). As to expression, high levels of expression in the atria with very low levels of expression in the ventricles (at protein level). Relatively low levels of expression detected in the brain compared to the atria (at protein level).

It localises to the secreted. The protein resides in the perikaryon. Its subcellular location is the cell projection. Hormone that plays a key role in mediating cardio-renal homeostasis, and is involved in vascular remodeling and regulating energy metabolism. Acts by specifically binding and stimulating NPR1 to produce cGMP, which in turn activates effector proteins, such as PRKG1, that drive various biological responses. Regulates vasodilation, natriuresis, diuresis and aldosterone synthesis and is therefore essential for regulating blood pressure, controlling the extracellular fluid volume and maintaining the fluid-electrolyte balance. Also involved in inhibiting cardiac remodeling and cardiac hypertrophy by inducing cardiomyocyte apoptosis and attenuating the growth of cardiomyocytes and fibroblasts. Plays a role in female pregnancy by promoting trophoblast invasion and spiral artery remodeling in uterus, and thus prevents pregnancy-induced hypertension. In adipose tissue, acts in various cGMP- and PKG-dependent pathways to regulate lipid metabolism and energy homeostasis. This includes up-regulating lipid metabolism and mitochondrial oxygen utilization by activating the AMP-activated protein kinase (AMPK), and increasing energy expenditure by acting via MAPK11 to promote the UCP1-dependent thermogenesis of brown adipose tissue. Binds the clearance receptor NPR3 which removes the hormone from circulation. In terms of biological role, may have a role in cardio-renal homeostasis through regulation of natriuresis, diuresis, vasodilation, and inhibiting aldosterone synthesis. In vitro, promotes the production of cGMP and induces vasodilation. May promote natriuresis, at least in part, by enhancing prostaglandin E2 synthesis resulting in the inhibition of renal Na+-K+-ATPase. However reports on the involvement of this peptide in mammal blood volume and blood pressure homeostasis are conflicting; according to a report, in vivo it is not sufficient to activate cGMP and does not inhibit collecting duct transport nor effect diuresis and natriuresis. Appears to bind to specific receptors that are distinct from the receptors bound by atrial natriuretic peptide and vessel dilator. Possibly enhances protein excretion in urine by decreasing proximal tubular protein reabsorption. Functionally, may have a role in cardio-renal homeostasis through regulation of natriuresis, diuresis, and vasodilation. In vitro, promotes the production of cGMP and induces vasodilation. May promote natriuresis, at least in part, by enhancing prostaglandin E2 synthesis resulting in the inhibition of renal Na+-K+-ATPase. However reports on the involvement of this peptide in mammal blood volume and blood pressure homeostasis are conflicting; according to a report, in vivo it is not sufficient to activate cGMP and does not inhibit collecting duct transport nor effect diuresis and natriuresis. Appears to bind to specific receptors that are distinct from the receptors bound by the atrial natriuretic and long-acting natriuretic peptides. Possibly functions in protein excretion in urine by maintaining the integrity of the proximal tubules and enhancing protein excretion by decreasing proximal tubular protein reabsorption. Its function is as follows. May have a role in cardio-renal homeostasis through regulation of diuresis and inhibiting aldosterone synthesis. In vitro, promotes the production of cGMP and induces vasodilation. May promote natriuresis, at least in part, by enhancing prostaglandin E2 synthesis resulting in the inhibition of renal Na+-K+-ATPase. May have a role in potassium excretion but not sodium excretion (natriuresis). Possibly enhances protein excretion in urine by decreasing proximal tubular protein reabsorption. Hormone produced in the kidneys that appears to be important for maintaining cardio-renal homeostasis. Mediates vasodilation, natriuresis and diuresis primarily in the renal system, in order to maintain the extracellular fluid volume and control the fluid-electrolyte balance. Specifically binds and stimulates cGMP production by renal transmembrane receptors, likely NPR1. Urodilatin not ANP, may be the natriuretic peptide responsible for the regulation of sodium and water homeostasis in the kidney. In terms of biological role, may have a role in cardio-renal homeostasis through regulation of natriuresis and vasodilation. In vivo promotes natriuresis and in vitro, vasodilates renal artery strips. Functionally, may have a role in cardio-renal homeostasis through regulation of regulation of natriuresis and vasodilation. In vivo promotes natriuresis. In vitro, vasodilates intestinal smooth muscle but not smooth muscle strips. Its function is as follows. May have a role in cardio-renal homeostasis through regulation of natriuresis and vasodilation. In vivo promotes natriuresis. In vitro, selectively vasodilates intestinal and vascular smooth muscle strips. May have a role in cardio-renal homeostasis through regulation of natriuresis and vasodilation. In vivo promotes natriuresis. In vitro, selectively vasodilates intestinal smooth muscle but not vascular smooth muscle strips. The chain is Natriuretic peptides A (Nppa) from Rattus norvegicus (Rat).